The sequence spans 80 residues: MAKFASIIALLFAALVLFAAFEAPTMVEAQKLCERPSGTWSGVCGNNNACKNQCINLEKARHGSCNYVFPAHKCICYFPC.

Positions 1–29 are cleaved as a signal peptide; that stretch reads MAKFASIIALLFAALVLFAAFEAPTMVEA. At glutamine 30 the chain carries Pyrrolidone carboxylic acid. Cystine bridges form between cysteine 33–cysteine 80, cysteine 44–cysteine 65, cysteine 50–cysteine 74, and cysteine 54–cysteine 76.

This sequence belongs to the DEFL family. In terms of assembly, forms oligomers in its native state.

The protein localises to the secreted. Functionally, possesses antifungal activity sensitive to inorganic cations. This is Defensin-like protein 1 (AFP1) from Raphanus sativus (Radish).